Consider the following 228-residue polypeptide: Lipoprotein-releasing system ATP-binding protein LolD (228 aa).

In terms of domain architecture, ABC transporter spans 6–228 (IKCINLNKSY…ENNQIFNYES (223 aa)). 42–49 (GKSGSGKT) is an ATP binding site.

This sequence belongs to the ABC transporter superfamily. Lipoprotein translocase (TC 3.A.1.125) family.

Its subcellular location is the cell inner membrane. Its function is as follows. Usually LolD forms an ABC transporter complex with LolC and LolE involved in the translocation of lipoprotein, in an ATP-dependent manner. However, LolE is certainly not functional as it is frameshifted. In Buchnera aphidicola subsp. Acyrthosiphon pisum (strain APS) (Acyrthosiphon pisum symbiotic bacterium), this protein is Lipoprotein-releasing system ATP-binding protein LolD.